Consider the following 349-residue polypeptide: Cytoplasmic tRNA 2-thiolation protein 2 (349 aa).

This sequence belongs to the CTU2/NCS2 family.

It is found in the cytoplasm. The protein operates within tRNA modification; 5-methoxycarbonylmethyl-2-thiouridine-tRNA biosynthesis. In terms of biological role, plays a central role in 2-thiolation of mcm(5)S(2)U at tRNA wobble positions of tRNA(Lys), tRNA(Glu) and tRNA(Gln). May act by forming a heterodimer with tut-1/ctu-1 that ligates sulfur from thiocarboxylated urm-1 onto the uridine of tRNAs at wobble position. The polypeptide is Cytoplasmic tRNA 2-thiolation protein 2 (Caenorhabditis briggsae).